A 151-amino-acid polypeptide reads, in one-letter code: Transcription elongation factor Spt5 (151 aa).

A KOW domain is found at 98–128 (PGQVVEIVAGAFKGMKARVIDVNQSKGQVTV).

It belongs to the archaeal Spt5 family. In terms of assembly, heterodimer composed of Spt4 and Spt5. Interacts with RNA polymerase (RNAP).

In terms of biological role, stimulates transcription elongation. This is Transcription elongation factor Spt5 from Aeropyrum pernix (strain ATCC 700893 / DSM 11879 / JCM 9820 / NBRC 100138 / K1).